The primary structure comprises 322 residues: Eukaryotic translation initiation factor 3 subunit I (322 aa).

WD repeat units follow at residues 4–43 (GHERSITQIKYNREGDLLFSSSKDQKPNVWYSLNGERLGT), 46–85 (GHQGAVWCLDVDWESRKLITGAGDMTTKIWDVEYGTVIAS), 141–180 (MVESKITSMLWGPLDETIITGHDNGNIAIWDIRKGQKVVD), 184–223 (DHTAGINDMQLSKDGTMFVTASRDTTAKLFDSESLMCLKT), and 281–322 (GHFG…NIFE).

The protein belongs to the eIF-3 subunit I family. Component of the eukaryotic translation initiation factor 3 (eIF-3) complex. The eIF-3 complex interacts with pix.

It localises to the cytoplasm. In terms of biological role, component of the eukaryotic translation initiation factor 3 (eIF-3) complex, which is involved in protein synthesis of a specialized repertoire of mRNAs and, together with other initiation factors, stimulates binding of mRNA and methionyl-tRNAi to the 40S ribosome. The eIF-3 complex specifically targets and initiates translation of a subset of mRNAs involved in cell proliferation. This chain is Eukaryotic translation initiation factor 3 subunit I, found in Drosophila virilis (Fruit fly).